The primary structure comprises 735 residues: Phosphoribosylformylglycinamidine synthase subunit PurL (735 aa).

Residue His-49 is part of the active site. ATP is bound by residues Tyr-52 and Lys-91. Mg(2+) is bound at residue Glu-93. Substrate is bound by residues 94–97 (SHNH) and Arg-116. Catalysis depends on His-95, which acts as the Proton acceptor. A Mg(2+)-binding site is contributed by Asp-117. Residue Gln-240 participates in substrate binding. Residue Asp-268 coordinates Mg(2+). Residue 312 to 314 (ESQ) participates in substrate binding. Positions 493 and 530 each coordinate ATP. Asn-531 contributes to the Mg(2+) binding site. Ser-533 provides a ligand contact to substrate.

It belongs to the FGAMS family. As to quaternary structure, monomer. Part of the FGAM synthase complex composed of 1 PurL, 1 PurQ and 2 PurS subunits.

It localises to the cytoplasm. It carries out the reaction N(2)-formyl-N(1)-(5-phospho-beta-D-ribosyl)glycinamide + L-glutamine + ATP + H2O = 2-formamido-N(1)-(5-O-phospho-beta-D-ribosyl)acetamidine + L-glutamate + ADP + phosphate + H(+). Its pathway is purine metabolism; IMP biosynthesis via de novo pathway; 5-amino-1-(5-phospho-D-ribosyl)imidazole from N(2)-formyl-N(1)-(5-phospho-D-ribosyl)glycinamide: step 1/2. Its function is as follows. Part of the phosphoribosylformylglycinamidine synthase complex involved in the purines biosynthetic pathway. Catalyzes the ATP-dependent conversion of formylglycinamide ribonucleotide (FGAR) and glutamine to yield formylglycinamidine ribonucleotide (FGAM) and glutamate. The FGAM synthase complex is composed of three subunits. PurQ produces an ammonia molecule by converting glutamine to glutamate. PurL transfers the ammonia molecule to FGAR to form FGAM in an ATP-dependent manner. PurS interacts with PurQ and PurL and is thought to assist in the transfer of the ammonia molecule from PurQ to PurL. The protein is Phosphoribosylformylglycinamidine synthase subunit PurL of Azorhizobium caulinodans (strain ATCC 43989 / DSM 5975 / JCM 20966 / LMG 6465 / NBRC 14845 / NCIMB 13405 / ORS 571).